A 490-amino-acid polypeptide reads, in one-letter code: Transcription factor lin-26 (490 aa).

3 disordered regions span residues 96–176 (KYKD…PLHQ), 236–262 (TPEYDDNHHSETISKASSEDLKTEPDS), and 302–326 (ASKPTTPASKRRNTDSNGAPSKKHR). A PEST region spans residues 101-110 (SSSPESPSTT). Low complexity predominate over residues 101 to 120 (SSSPESPSTTASTAAQHTPP). Polar residues-rich tracts occupy residues 123–132 (AVSTPTSINT) and 151–176 (NLSTKKVSPSSIEKQLQRTSHNPLHQ). Residues 236–260 (TPEYDDNHHSETISKASSEDLKTEP) show a composition bias toward basic and acidic residues. Residues 353–381 (YKCALCGKPTTLNSTGSRWNLLRHVIMIH) form a C2H2-type; degenerate zinc finger.

As to expression, expressed in somatic gonads and germline precursors until the 50-cell stage. After the 100-cell stage, expression is seen in differentiating hypodermal and support cells (at protein level).

The protein localises to the nucleus. Probable transcription factor. Required to specify the fates of hypodermal and neuron-associated support cells. Functions during vulval development, playing a role in vulval precursor cell fate specification. Positively modulates expression of homeobox protein lin-39, perhaps by binding to regulatory regions of the lin-39 gene, acting in the vulval lineage. This chain is Transcription factor lin-26, found in Caenorhabditis elegans.